We begin with the raw amino-acid sequence, 76 residues long: KANTR integral membrane protein (76 aa).

An N-terminal signal peptide occupies residues 1-25; that stretch reads MSPFSLLILVICAFSLFFLINLTRG. At 26–34 the chain is on the extracellular side; the sequence is LSILLVFSK. The chain crosses the membrane as a helical span at residues 35–55; sequence NQLLALLLLSIVSLFSISLIS. The Cytoplasmic portion of the chain corresponds to 56-76; sequence ALIFFDLLPSTFFGFILLFFF.

It is found in the membrane. In Homo sapiens (Human), this protein is KANTR integral membrane protein.